The following is a 164-amino-acid chain: MVLKTELCRFSGAKIYPGRGIRFIRGDSQVFLFVNSKCKRYFHNRLKPSKLTWTAMFRKQHKKDAAQEAVKKRRRATKKPYSRSIVGATLEVIQKKRTEKPEVRDAAREAALREIKERIKKTKDEKKAKKAEVASKAQKSQGKGNVQKGALPKGPKMGGGGGKA.

2 disordered regions span residues 63-82 (KDAA…KPYS) and 117-164 (ERIK…GGKA). Residues 71–81 (KKRRRATKKPY) are compositionally biased toward basic residues. Residues 117 to 133 (ERIKKTKDEKKAKKAEV) are compositionally biased toward basic and acidic residues.

Belongs to the eukaryotic ribosomal protein eL24 family.

Its subcellular location is the cytoplasm. This chain is Large ribosomal subunit protein eL24 (RPL24), found in Cicer arietinum (Chickpea).